Here is a 420-residue protein sequence, read N- to C-terminus: Deoxyribodipyrimidine photo-lyase (420 aa).

In terms of domain architecture, Photolyase/cryptochrome alpha/beta spans 2-124; that stretch reads GPLLVWHRGD…PLHLLPAPHL (123 aa). Residues 152–175 are disordered; sequence APEALPKGPEEGEIPREDPGLPLP. The span at 159-170 shows a compositional bias: basic and acidic residues; the sequence is GPEEGEIPREDP. Residue Tyr197 participates in FAD binding. Arg201 provides a ligand contact to DNA. FAD is bound at residue 209 to 213; it reads GSRLS. Interaction with DNA regions lie at residues 244–251 and 310–311; these read ELLWRDFS and NR. 341 to 343 is an FAD binding site; that stretch reads DGD. Gln373 lines the DNA pocket.

The protein belongs to the DNA photolyase class-1 family. In terms of assembly, monomer. The cofactor is FAD.

It catalyses the reaction cyclobutadipyrimidine (in DNA) = 2 pyrimidine residues (in DNA).. In terms of biological role, involved in repair of UV radiation-induced DNA damage. Catalyzes the light-dependent monomerization (300-600 nm) of cyclobutyl pyrimidine dimers (in cis-syn configuration), which are formed between adjacent bases on the same DNA strand upon exposure to ultraviolet radiation. The polypeptide is Deoxyribodipyrimidine photo-lyase (phr) (Thermus thermophilus (strain ATCC BAA-163 / DSM 7039 / HB27)).